We begin with the raw amino-acid sequence, 532 residues long: 3-hydroxy-3-methylglutaryl-coenzyme A reductase 1 (532 aa).

A helical membrane pass occupies residues 63–83 (FATVVYLVSLFAHPDAPATTT). The tract at residues 77–117 (DAPATTTGDDDDGQGGSRRARPAAAEPAPMHGHGGGMMEAD) is linker. A disordered region spans residues 78–111 (APATTTGDDDDGQGGSRRARPAAAEPAPMHGHGG). Positions 98 to 107 (PAAAEPAPMH) are enriched in low complexity. The catalytic stretch occupies residues 118-532 (DEEIVAAVAS…SSKDVAKAAS (415 aa)). Glu211 (charge relay system) is an active-site residue. Residue Asn275 is glycosylated (N-linked (GlcNAc...) asparagine). Residues Lys343 and Asp419 each act as charge relay system in the active site. His517 functions as the Proton donor in the catalytic mechanism. Asn521 carries an N-linked (GlcNAc...) asparagine glycan.

The protein belongs to the HMG-CoA reductase family.

The protein localises to the endoplasmic reticulum membrane. It catalyses the reaction (R)-mevalonate + 2 NADP(+) + CoA = (3S)-3-hydroxy-3-methylglutaryl-CoA + 2 NADPH + 2 H(+). It participates in metabolic intermediate biosynthesis; (R)-mevalonate biosynthesis; (R)-mevalonate from acetyl-CoA: step 3/3. Catalyzes the synthesis of mevalonate. The specific precursor of all isoprenoid compounds present in plants. This is 3-hydroxy-3-methylglutaryl-coenzyme A reductase 1 (HMG1) from Oryza sativa subsp. japonica (Rice).